A 90-amino-acid chain; its full sequence is Small ribosomal subunit protein bS16 (90 aa).

Belongs to the bacterial ribosomal protein bS16 family.

The chain is Small ribosomal subunit protein bS16 from Lactobacillus acidophilus (strain ATCC 700396 / NCK56 / N2 / NCFM).